The chain runs to 340 residues: Guanine nucleotide-binding protein G(I)/G(S)/G(T) subunit beta-3 (340 aa).

WD repeat units follow at residues Gly-53–Asp-83, Leu-95–Ser-125, Ala-141–Asp-170, Gly-182–Asp-212, Gly-224–Asp-254, Ser-268–Asp-298, and Gly-310–Asn-340.

The protein belongs to the WD repeat G protein beta family. In terms of assembly, g proteins are composed of 3 units, alpha, beta and gamma. Interacts with RASD2. As to expression, expressed at a high level in the heart and at a much lower level in the brain.

In terms of biological role, guanine nucleotide-binding proteins (G proteins) are involved as a modulator or transducer in various transmembrane signaling systems. The beta and gamma chains are required for the GTPase activity, for replacement of GDP by GTP, and for G protein-effector interaction. The sequence is that of Guanine nucleotide-binding protein G(I)/G(S)/G(T) subunit beta-3 (Gnb3) from Rattus norvegicus (Rat).